Here is a 154-residue protein sequence, read N- to C-terminus: Flagellar assembly factor FliW (154 aa).

This sequence belongs to the FliW family. In terms of assembly, interacts with translational regulator CsrA and flagellin(s).

The protein localises to the cytoplasm. Acts as an anti-CsrA protein, binds CsrA and prevents it from repressing translation of its target genes, one of which is flagellin. Binds to flagellin and participates in the assembly of the flagellum. The sequence is that of Flagellar assembly factor FliW from Carboxydothermus hydrogenoformans (strain ATCC BAA-161 / DSM 6008 / Z-2901).